Reading from the N-terminus, the 177-residue chain is Mitochondrial inner membrane protease subunit 2 (177 aa).

Catalysis depends on residues serine 41 and lysine 91. The helical transmembrane segment at 134–152 (TFGPISSGLVIGKAITIVW) threads the bilayer.

The protein belongs to the peptidase S26 family. IMP2 subfamily. As to quaternary structure, component of the mitochondrial inner membrane peptidase (IMP) complex which at least consists of IMP1, IMP2 and SOM1. In terms of processing, the N-terminus is blocked.

It localises to the mitochondrion inner membrane. In terms of biological role, catalytic component of the mitochondrial inner membrane peptidase (IMP) complex. IMP catalyzes the removal of signal peptides required for the targeting of proteins from the mitochondrial matrix, across the inner membrane, into the inter-membrane space. The two catalytic IMP subunits seem to have non-overlapping substrate specificities. IMP2 substrates include nuclear encoded CYB2, mitochondrially encoded COX2 and cytochrome c1. Required for the stability of IMP1. This is Mitochondrial inner membrane protease subunit 2 (IMP2) from Saccharomyces cerevisiae (strain ATCC 204508 / S288c) (Baker's yeast).